A 435-amino-acid chain; its full sequence is Enolase (435 aa).

(2R)-2-phosphoglycerate is bound at residue Q163. E205 acts as the Proton donor in catalysis. Residues D243, E292, and D319 each contribute to the Mg(2+) site. (2R)-2-phosphoglycerate contacts are provided by K344, R373, S374, and K395. K344 acts as the Proton acceptor in catalysis.

This sequence belongs to the enolase family. In terms of assembly, homooctamer, a tetramer of homodimers. The cofactor is Mg(2+).

It is found in the cytoplasm. The protein resides in the secreted. The protein localises to the cell surface. Its subcellular location is the cell wall. It catalyses the reaction (2R)-2-phosphoglycerate = phosphoenolpyruvate + H2O. It participates in carbohydrate degradation; glycolysis; pyruvate from D-glyceraldehyde 3-phosphate: step 4/5. Catalyzes the reversible conversion of 2-phosphoglycerate (2-PG) into phosphoenolpyruvate (PEP). It is essential for the degradation of carbohydrates via glycolysis. Its function is as follows. 'Moonlights' as a plasminogen receptor. Binds plasminogen and more weakly plasmin when expressed on the bacterial cell surface; probably has more than one plasmin(ogen) binding site, may bind via Lys residues. Plasminogen binding potentially allows the bacterium to acquire surface-associated proteolytic activity, which in turn contributes to tissue invasion and virulence. This Streptococcus pyogenes serotype M6 (strain ATCC BAA-946 / MGAS10394) protein is Enolase.